The sequence spans 233 residues: Small ribosomal subunit protein uS3 (233 aa).

The region spanning 28 to 96 is the KH type-2 domain; it reads EFADNLDSDF…LRKVVADIAG (69 aa).

Belongs to the universal ribosomal protein uS3 family. In terms of assembly, part of the 30S ribosomal subunit. Forms a tight complex with proteins S10 and S14.

Binds the lower part of the 30S subunit head. Binds mRNA in the 70S ribosome, positioning it for translation. The chain is Small ribosomal subunit protein uS3 from Shigella flexneri.